We begin with the raw amino-acid sequence, 267 residues long: 3-methyl-2-oxobutanoate hydroxymethyltransferase (267 aa).

2 residues coordinate Mg(2+): Asp46 and Asp85. Residues 46–47, Asp85, and Lys115 contribute to the 3-methyl-2-oxobutanoate site; that span reads DS. Residue Glu117 participates in Mg(2+) binding. The active-site Proton acceptor is the Glu184.

The protein belongs to the PanB family. In terms of assembly, homodecamer; pentamer of dimers. The cofactor is Mg(2+).

The protein localises to the cytoplasm. It catalyses the reaction 3-methyl-2-oxobutanoate + (6R)-5,10-methylene-5,6,7,8-tetrahydrofolate + H2O = 2-dehydropantoate + (6S)-5,6,7,8-tetrahydrofolate. Its pathway is cofactor biosynthesis; (R)-pantothenate biosynthesis; (R)-pantoate from 3-methyl-2-oxobutanoate: step 1/2. In terms of biological role, catalyzes the reversible reaction in which hydroxymethyl group from 5,10-methylenetetrahydrofolate is transferred onto alpha-ketoisovalerate to form ketopantoate. The sequence is that of 3-methyl-2-oxobutanoate hydroxymethyltransferase from Geobacter metallireducens (strain ATCC 53774 / DSM 7210 / GS-15).